Reading from the N-terminus, the 217-residue chain is Large ribosomal subunit protein uL3 (217 aa).

The span at 133-145 (GRASHGNSRSHNV) shows a compositional bias: polar residues. The interval 133–153 (GRASHGNSRSHNVPGSIGMAQ) is disordered. Gln153 bears the N5-methylglutamine mark.

It belongs to the universal ribosomal protein uL3 family. As to quaternary structure, part of the 50S ribosomal subunit. Forms a cluster with proteins L14 and L19. Post-translationally, methylated by PrmB.

Functionally, one of the primary rRNA binding proteins, it binds directly near the 3'-end of the 23S rRNA, where it nucleates assembly of the 50S subunit. The polypeptide is Large ribosomal subunit protein uL3 (Ralstonia pickettii (strain 12J)).